We begin with the raw amino-acid sequence, 445 residues long: Zinc finger protein SHOOT GRAVITROPISM 5 (445 aa).

Over residues 22-31 the composition is skewed to low complexity; that stretch reads SSSDPFLSSS. Residues 22-59 form a disordered region; that stretch reads SSSDPFLSSSENGVTTTNTSTQKRKRRPAGTPDPDAEV. Residues 32-42 are compositionally biased toward polar residues; sequence ENGVTTTNTST. 3 consecutive C2H2-type zinc fingers follow at residues 73–95, 115–145, and 151–178; these read YICE…RRRH, YVCP…RRKH, and WVCE…TRGH. Zn(2+) is bound by residues Cys-153, Cys-156, His-169, Cys-173, Cys-180, Cys-182, His-195, and Cys-199. Residues 178 to 201 form a CCHC-type 2; atypical zinc finger; the sequence is HSCDCGRVFSRVESFIEHQDNCSA. An SHR-binding region spans residues 188-200; that stretch reads RVESFIEHQDNCS. 2 disordered regions span residues 203–253 and 281–314; these read RVHR…LEGR and SSNQ…LNLS. The segment covering 214-248 has biased composition (polar residues); that stretch reads TAVTVPACSSRTASTVSTPSSETNYGGTVAVTTPQ. Residues 281–293 are compositionally biased toward low complexity; the sequence is SSNQNPNQENQQQ. The stretch at 340-397 forms a coiled coil; the sequence is MKIAMKEKAYAEEAKREAKRQREIAENEFANAKKIRQKAQAELERAKFLKEQSMKKIS.

Mainly expressed in the endodermis, the gravity-sensing tissue in inflorescence stems. Mostly present in stems and flowers, and, to a lower extent, in seedlings, hypocotyls, roots and the shoot apical meristem (SAM).

The protein localises to the nucleus. Its function is as follows. Transcription factor involved in inflorescence stems gravitropism, probably by regulating starch accumulation in amyloplasts of graviperceptive cells. Required for stem circumnutation movements. Regulates lateral organ morphogenesis and gravitropic responses. Acts cooperatively with IDD16 to control silique and branche orientation. Involved in the establishment of auxin gradients through the regulation of auxin biosynthesis and transport. This is Zinc finger protein SHOOT GRAVITROPISM 5 from Arabidopsis thaliana (Mouse-ear cress).